A 257-amino-acid polypeptide reads, in one-letter code: Phosphonates import ATP-binding protein PhnC 1 (257 aa).

Residues Ile-2–Leu-246 enclose the ABC transporter domain. Gly-35–Ser-42 contributes to the ATP binding site.

Belongs to the ABC transporter superfamily. Phosphonates importer (TC 3.A.1.9.1) family. As to quaternary structure, the complex is composed of two ATP-binding proteins (PhnC), two transmembrane proteins (PhnE) and a solute-binding protein (PhnD).

It localises to the cell membrane. It carries out the reaction phosphonate(out) + ATP + H2O = phosphonate(in) + ADP + phosphate + H(+). Its function is as follows. Part of the ABC transporter complex PhnCDE involved in phosphonates import. Responsible for energy coupling to the transport system. This is Phosphonates import ATP-binding protein PhnC 1 from Halalkalibacterium halodurans (strain ATCC BAA-125 / DSM 18197 / FERM 7344 / JCM 9153 / C-125) (Bacillus halodurans).